The sequence spans 121 residues: Large ribosomal subunit protein bL12 (121 aa).

The protein belongs to the bacterial ribosomal protein bL12 family. In terms of assembly, homodimer. Part of the ribosomal stalk of the 50S ribosomal subunit. Forms a multimeric L10(L12)X complex, where L10 forms an elongated spine to which 2 to 4 L12 dimers bind in a sequential fashion. Binds GTP-bound translation factors.

Functionally, forms part of the ribosomal stalk which helps the ribosome interact with GTP-bound translation factors. Is thus essential for accurate translation. The sequence is that of Large ribosomal subunit protein bL12 from Streptococcus agalactiae serotype V (strain ATCC BAA-611 / 2603 V/R).